Reading from the N-terminus, the 633-residue chain is Extracellular metalloproteinase 3 (633 aa).

An N-terminal signal peptide occupies residues 1 to 18 (MHGLLLAGLLALPMNVLA). Positions 19–246 (HPAEQHASNV…VHNVVDYVAS (228 aa)) are excised as a propeptide. Asn410 carries N-linked (GlcNAc...) asparagine glycosylation. Residue His429 coordinates Zn(2+). Residue Glu430 is part of the active site. His433 serves as a coordination point for Zn(2+). Asn480 and Asn622 each carry an N-linked (GlcNAc...) asparagine glycan.

Belongs to the peptidase M36 family. Zn(2+) serves as cofactor.

It localises to the secreted. In terms of biological role, secreted metalloproteinase probably acting as a virulence factor. This chain is Extracellular metalloproteinase 3 (MEP3), found in Arthroderma benhamiae (Trichophyton mentagrophytes).